The primary structure comprises 393 residues: Methylthioribose kinase (393 aa).

ATP is bound by residues asparagine 38, lysine 53, and 107 to 109; that span reads EDL. Aspartate 225 provides a ligand contact to substrate. An ATP-binding site is contributed by 242–244; that stretch reads DPE. Substrate is bound at residue arginine 332.

Belongs to the methylthioribose kinase family. As to quaternary structure, homodimer.

It catalyses the reaction 5-(methylsulfanyl)-D-ribose + ATP = 5-(methylsulfanyl)-alpha-D-ribose 1-phosphate + ADP + H(+). It functions in the pathway amino-acid biosynthesis; L-methionine biosynthesis via salvage pathway; S-methyl-5-thio-alpha-D-ribose 1-phosphate from S-methyl-5'-thioadenosine (hydrolase route): step 2/2. Functionally, catalyzes the phosphorylation of methylthioribose into methylthioribose-1-phosphate. This Bacillus cereus (strain ATCC 10987 / NRS 248) protein is Methylthioribose kinase.